The sequence spans 188 residues: Elongation factor P (188 aa).

Lysine 34 bears the N6-(3,6-diaminohexanoyl)-5-hydroxylysine mark.

Belongs to the elongation factor P family. In terms of processing, may be beta-lysylated on the epsilon-amino group of Lys-34 by the combined action of EpmA and EpmB, and then hydroxylated on the C5 position of the same residue by EpmC (if this protein is present). Lysylation is critical for the stimulatory effect of EF-P on peptide-bond formation. The lysylation moiety may extend toward the peptidyltransferase center and stabilize the terminal 3-CCA end of the tRNA. Hydroxylation of the C5 position on Lys-34 may allow additional potential stabilizing hydrogen-bond interactions with the P-tRNA.

Its subcellular location is the cytoplasm. It participates in protein biosynthesis; polypeptide chain elongation. Involved in peptide bond synthesis. Alleviates ribosome stalling that occurs when 3 or more consecutive Pro residues or the sequence PPG is present in a protein, possibly by augmenting the peptidyl transferase activity of the ribosome. Modification of Lys-34 is required for alleviation. The protein is Elongation factor P of Histophilus somni (strain 129Pt) (Haemophilus somnus).